We begin with the raw amino-acid sequence, 179 residues long: Small ribosomal subunit protein uS5 (179 aa).

The S5 DRBM domain occupies 22 to 85 (MIEKLVAVNR…EYARKRMSNV (64 aa)).

The protein belongs to the universal ribosomal protein uS5 family. As to quaternary structure, part of the 30S ribosomal subunit. Contacts proteins S4 and S8.

Its function is as follows. With S4 and S12 plays an important role in translational accuracy. Located at the back of the 30S subunit body where it stabilizes the conformation of the head with respect to the body. The polypeptide is Small ribosomal subunit protein uS5 (Xylella fastidiosa (strain M23)).